The primary structure comprises 128 residues: Ig kappa chain V-V region T1 (128 aa).

The first 20 residues, 1–20 (MRTPAQFLGILLLWFPGIKC), serve as a signal peptide directing secretion. Positions 21-43 (DIKMTQSPSSMYASLGERVTISC) are framework-1. A disulfide bridge connects residues Cys43 and Cys108. The tract at residues 44-54 (KASQDINSYLT) is complementarity-determining-1. A framework-2 region spans residues 55 to 69 (WFQQKPGKSPKTLLY). A complementarity-determining-2 region spans residues 70–76 (RANRLVD). The framework-3 stretch occupies residues 77–108 (GVPSRFSGSGSGQDFSLTISSLEYEDMGIYYC). A complementarity-determining-3 region spans residues 109–117 (LQYDEFPLT). Residues 118–127 (FGAGTKLELK) are framework-4.

This Mus musculus (Mouse) protein is Ig kappa chain V-V region T1.